The following is a 221-amino-acid chain: Deep sea actinoporin Cjtox II (221 aa).

A signal peptide spans 1–19 (MNRLIIVCLVAAMIYSTIA). A propeptide spanning residues 20 to 42 (LPMKEDISNDERPISVNEEPVKK) is cleaved from the precursor. Phosphocholine contacts are provided by Ser-96, Val-129, Ser-147, Pro-149, Tyr-175, Tyr-179, and Tyr-180. The interval 147–162 (SVPYDYNWYENWWNIK) is trp-rich region, which is important for the binding to lipid membrane. A Cell attachment site, crucial for protein stability motif is present at residues 186–188 (KGD).

It belongs to the actinoporin family. Sea anemone subfamily. Octamer or nonamer in membranes. Monomer in the soluble state. Expressed in actinopharynx and in gastric filaments. Is not expressed in tentacles.

Its subcellular location is the secreted. It localises to the nematocyst. The protein resides in the target cell membrane. In terms of biological role, may be involved in digestion of prey. Pore-forming protein that forms cations-selective hydrophilic pores of around 1 nm and causes cytolysis. Pore formation is a multi-step process that involves specific recognition of membrane sphingomyelin (but neither cholesterol nor phosphatidylcholine) using aromatic rich region and adjacent phosphocholine (POC) binding site, firm binding to the membrane (mainly driven by hydrophobic interactions) accompanied by the transfer of the N-terminal region to the lipid-water interface and finally pore formation after oligomerization of monomers. Shows hemolytic activity on equine erythrocytes. Hemolysis is highly inhibited in presence of sphingomyelin, suggesting that this protein targets sphingomyelin. The protein is Deep sea actinoporin Cjtox II of Cribrinopsis japonica (Deep-sea anemone).